A 535-amino-acid polypeptide reads, in one-letter code: D-2-hydroxyglutarate dehydrogenase, mitochondrial (535 aa).

Residues 1-50 constitute a mitochondrion transit peptide; that stretch reads MVLHLVPRWSASLFRASPRWKKTYSQRASAQLKWLGCPRSVYSPLACRAY. An FAD-binding PCMH-type domain is found at 110-289; sequence VRGCSKVLLR…TAVSIVCPPR (180 aa). K115 carries the N6-succinyllysine modification. (R)-2-hydroxyglutarate is bound by residues R400, T404, and K415. R400 lines the (R)-lactate pocket. Positions 400, 404, and 415 each coordinate (R)-malate. Zn(2+) contacts are provided by H448 and H455. Residue N457 coordinates (R)-2-hydroxyglutarate. Position 489 (E489) interacts with Zn(2+). H490 lines the (R)-2-hydroxyglutarate pocket. H490 is a (R)-lactate binding site. H490 provides a ligand contact to (R)-malate.

This sequence belongs to the FAD-binding oxidoreductase/transferase type 4 family. It depends on FAD as a cofactor.

The protein resides in the mitochondrion. It carries out the reaction (R)-2-hydroxyglutarate + A = 2-oxoglutarate + AH2. The enzyme catalyses (R)-malate + A = oxaloacetate + AH2. With respect to regulation, activated by zinc, cobalt and manganese ions. Inhibited by EDTA. Its function is as follows. Catalyzes the oxidation of D-2-hydroxyglutarate (D-2-HG) to alpha-ketoglutarate. Also catalyzes the oxidation of other D-2-hydroxyacids, such as D-malate (D-MAL) and D-lactate (D-LAC). Exhibits high activities towards D-2-HG and D-MAL but a very weak activity towards D-LAC. The protein is D-2-hydroxyglutarate dehydrogenase, mitochondrial of Rattus norvegicus (Rat).